Consider the following 236-residue polypeptide: L-aspartate dehydrogenase (236 aa).

Residues 10 to 11 (AI), D31, 58 to 59 (AS), Y66, 80 to 81 (LS), A111, and N162 each bind NAD(+). H189 is a catalytic residue. NAD(+) is bound at residue 212 to 215 (NPKT).

Belongs to the L-aspartate dehydrogenase family. As to quaternary structure, homodimer.

It carries out the reaction L-aspartate + NADP(+) + H2O = oxaloacetate + NH4(+) + NADPH + H(+). The catalysed reaction is L-aspartate + NAD(+) + H2O = oxaloacetate + NH4(+) + NADH + H(+). Its pathway is cofactor biosynthesis; NAD(+) biosynthesis; iminoaspartate from L-aspartate (dehydrogenase route): step 1/1. In terms of biological role, specifically catalyzes the NAD or NADP-dependent dehydrogenation of L-aspartate to iminoaspartate. This is L-aspartate dehydrogenase from Archaeoglobus fulgidus (strain ATCC 49558 / DSM 4304 / JCM 9628 / NBRC 100126 / VC-16).